Here is a 263-residue protein sequence, read N- to C-terminus: Dihydromethanophenazine:CoB--CoM heterodisulfide reductase subunit E (263 aa).

5 consecutive transmembrane segments (helical) span residues T18–I38, V108–F128, F150–L170, I184–A204, and V221–I241.

Belongs to the HdrE family. In terms of assembly, the dihydromethanophenazine:CoB--CoM heterodisulfide reductase is composed of two subunits; HdrD and HdrE. The cofactor is heme b.

It is found in the cell membrane. It carries out the reaction methanophenazine + coenzyme B + coenzyme M = dihydromethanophenazine + coenzyme M-coenzyme B heterodisulfide. It participates in cofactor metabolism; coenzyme M-coenzyme B heterodisulfide reduction; coenzyme B and coenzyme M from coenzyme M-coenzyme B heterodisulfide: step 1/1. Its function is as follows. Part of a complex that catalyzes the reversible reduction of CoM-S-S-CoB to the thiol-coenzymes H-S-CoM (coenzyme M) and H-S-CoB (coenzyme B). HdrE may be responsible for anchoring the complex to the membrane. The protein is Dihydromethanophenazine:CoB--CoM heterodisulfide reductase subunit E (hdrE) of Methanosarcina barkeri (strain Fusaro / DSM 804).